Reading from the N-terminus, the 550-residue chain is Chaperonin GroEL (550 aa).

ATP is bound by residues 30 to 33 (TLGP), Lys-51, 87 to 91 (DGTTT), Gly-414, and Asp-494.

This sequence belongs to the chaperonin (HSP60) family. Forms a cylinder of 14 subunits composed of two heptameric rings stacked back-to-back. Interacts with the co-chaperonin GroES.

Its subcellular location is the cytoplasm. It carries out the reaction ATP + H2O + a folded polypeptide = ADP + phosphate + an unfolded polypeptide.. Its function is as follows. Together with its co-chaperonin GroES, plays an essential role in assisting protein folding. The GroEL-GroES system forms a nano-cage that allows encapsulation of the non-native substrate proteins and provides a physical environment optimized to promote and accelerate protein folding. This chain is Chaperonin GroEL, found in Buchnera aphidicola subsp. Thelaxes suberi.